The chain runs to 503 residues: Probable cytosol aminopeptidase (503 aa).

Mn(2+) contacts are provided by K271 and D276. Residue K283 is part of the active site. Mn(2+)-binding residues include D294, D353, and E355. Residue R357 is part of the active site.

Belongs to the peptidase M17 family. Mn(2+) serves as cofactor.

It is found in the cytoplasm. It catalyses the reaction Release of an N-terminal amino acid, Xaa-|-Yaa-, in which Xaa is preferably Leu, but may be other amino acids including Pro although not Arg or Lys, and Yaa may be Pro. Amino acid amides and methyl esters are also readily hydrolyzed, but rates on arylamides are exceedingly low.. The enzyme catalyses Release of an N-terminal amino acid, preferentially leucine, but not glutamic or aspartic acids.. Functionally, presumably involved in the processing and regular turnover of intracellular proteins. Catalyzes the removal of unsubstituted N-terminal amino acids from various peptides. This chain is Probable cytosol aminopeptidase, found in Chlorobaculum parvum (strain DSM 263 / NCIMB 8327) (Chlorobium vibrioforme subsp. thiosulfatophilum).